A 62-amino-acid polypeptide reads, in one-letter code: Temporin-CDYb (62 aa).

The N-terminal stretch at 1-22 is a signal peptide; that stretch reads MFTLKKSLLLLFFLGTINLSLC. The propeptide occupies 23–45; that stretch reads EEERDADEEERRDDPEERAVQVE. L60 carries the post-translational modification Leucine amide.

Belongs to the frog skin active peptide (FSAP) family. Temporin subfamily. As to expression, expressed by the skin glands.

The protein localises to the secreted. Antimicrobial peptide. Has low activity against the Gram-positive bacterium S.aureus (MIC&gt;100 uM) and the Gram-negative bacterium E.coli (MIC&gt;100 uM). Has weak hemolytic activity against human erythrocytes. The polypeptide is Temporin-CDYb (Rana dybowskii (Dybovsky's frog)).